A 426-amino-acid polypeptide reads, in one-letter code: Egl nine homolog 1 (426 aa).

Alanine 2 bears the N-acetylalanine mark. Positions 6–20 (GGPGGPSPSERDRQY) are required for nuclear export. Serine 12 is subject to Phosphoserine. Positions 21, 24, 33, 36, 42, 46, 54, and 58 each coordinate Zn(2+). The segment at 21–58 (CELCGKMENLLRCSRCRSSFYCCKEHQRQDWKKHKLVC) adopts an MYND-type; atypical zinc-finger fold. Disordered stretches follow at residues 65–129 (LGHG…PCRA) and 160–184 (ANLY…PNGQ). Residues 77-87 (PAPPAAVPPPR) show a composition bias toward pro residues. A compositionally biased stretch (basic and acidic residues) spans 89–103 (GAREPRKAAARRDNA). A compositionally biased stretch (low complexity) spans 120 to 129 (PAAAASPCRA). Position 125 is a phosphoserine (serine 125). S-nitrosocysteine is present on residues cysteine 201 and cysteine 208. The beta(2)beta(3) 'finger-like' loop stretch occupies residues 241 to 251 (VSQKSDSSKDI). Positions 291–392 (KINGRTKAMV…RYAITVWYFD (102 aa)) constitute a Fe2OG dioxygenase domain. Cysteine 302 carries the post-translational modification S-nitrosocysteine. The Fe cation site is built by histidine 313 and aspartate 315. 2 positions are modified to S-nitrosocysteine: cysteine 323 and cysteine 326. Position 374 (histidine 374) interacts with Fe cation. Arginine 383 contacts 2-oxoglutarate.

In terms of assembly, monomer. Interacts with ING4; the interaction inhibits the hydroxylation of HIF alpha proteins. Interacts with PTGES3 (via PXLE motif); thereby recruiting EGLN1 to the HSP90 pathway to facilitate HIF alpha proteins hydroxylation. Interacts with LIMD1. Found in a complex composed of LIMD1, VHL, EGLN1/PHD2, ELOB and CUL2. Interacts with EPAS1. Interacts with CBFA2T3. Interacts with HIF1A. Fe(2+) serves as cofactor. The cofactor is L-ascorbate. In terms of processing, S-nitrosylation inhibits the enzyme activity up to 60% under aerobic conditions. Chelation of Fe(2+) has no effect on the S-nitrosylation. It is uncertain whether nitrosylation occurs on Cys-323 or Cys-326. According to PubMed:11056053, widely expressed with highest levels in skeletal muscle and heart, moderate levels in pancreas, brain (dopaminergic neurons of adult and fetal substantia nigra) and kidney, and lower levels in lung and liver. According to PubMed:12351678 widely expressed with highest levels in brain, kidney and adrenal gland. Expressed in cardiac myocytes, aortic endothelial cells and coronary artery smooth muscle. According to PubMed:12788921; expressed in adult and fetal heart, brain, liver, lung, skeletal muscle and kidney. Also expressed in placenta. Highest levels in adult heart, brain, lung and liver and fetal brain, heart spleen and skeletal muscle.

Its subcellular location is the cytoplasm. It localises to the nucleus. The enzyme catalyses L-prolyl-[hypoxia-inducible factor alpha subunit] + 2-oxoglutarate + O2 = trans-4-hydroxy-L-prolyl-[hypoxia-inducible factor alpha subunit] + succinate + CO2. Its activity is regulated as follows. Following exposure to hypoxia, activated in HeLa cells but not in cardiovascular cells. Cellular oxygen sensor that catalyzes, under normoxic conditions, the post-translational formation of 4-hydroxyproline in hypoxia-inducible factor (HIF) alpha proteins. Hydroxylates a specific proline found in each of the oxygen-dependent degradation (ODD) domains (N-terminal, NODD, and C-terminal, CODD) of HIF1A. Also hydroxylates HIF2A. Has a preference for the CODD site for both HIF1A and HIF1B. Hydroxylated HIFs are then targeted for proteasomal degradation via the von Hippel-Lindau ubiquitination complex. Under hypoxic conditions, the hydroxylation reaction is attenuated allowing HIFs to escape degradation resulting in their translocation to the nucleus, heterodimerization with HIF1B, and increased expression of hypoxy-inducible genes. EGLN1 is the most important isozyme under normoxia and, through regulating the stability of HIF1, involved in various hypoxia-influenced processes such as angiogenesis in retinal and cardiac functionality. Target proteins are preferentially recognized via a LXXLAP motif. The sequence is that of Egl nine homolog 1 from Homo sapiens (Human).